The primary structure comprises 461 residues: Vitamin K-dependent protein C (461 aa).

An N-terminal signal peptide occupies residues 1 to 18 (MWQFRIFLLFASTWGISG). A propeptide spanning residues 19-41 (VSAHPDPVFSSSEGAHQVLRVRR) is cleaved from the precursor. Residues 42–87 (ANSFLEEVRAGSLERECMEEICDFEEAQEIFQNVEDTLAFWIKYFD) form the Gla domain. Glutamate 47, glutamate 48, glutamate 55, glutamate 57, glutamate 60, glutamate 61, glutamate 66, glutamate 67, glutamate 70, and glutamate 76 each carry 4-carboxyglutamate. A disulfide bridge connects residues cysteine 58 and cysteine 63. 9 disulfide bridges follow: cysteine 91–cysteine 110, cysteine 100–cysteine 105, cysteine 104–cysteine 119, cysteine 121–cysteine 130, cysteine 139–cysteine 150, cysteine 146–cysteine 159, cysteine 161–cysteine 174, cysteine 182–cysteine 320, and cysteine 239–cysteine 255. 2 consecutive EGF-like domains span residues 96–131 (LDHQ…RFCQ) and 135–175 (GFQD…MHCR). Aspartate 112 is modified ((3R)-3-hydroxyaspartate). One can recognise a Peptidase S1 domain in the interval 213–450 (IVNGTLTKQG…YLKWIHSYIG (238 aa)). Residue asparagine 215 is glycosylated (N-linked (GlcNAc...) asparagine). The active-site Charge relay system is histidine 254. A glycan (N-linked (GlcNAc...) asparagine) is linked at asparagine 291. The Charge relay system role is filled by aspartate 300. Residue asparagine 355 is glycosylated (N-linked (GlcNAc...) asparagine). Disulfide bonds link cysteine 373–cysteine 387 and cysteine 398–cysteine 426. Catalysis depends on serine 402, which acts as the Charge relay system.

Belongs to the peptidase S1 family. As to quaternary structure, synthesized as a single chain precursor, which is cleaved into a light chain and a heavy chain held together by a disulfide bond. The enzyme is then activated by thrombin, which cleaves a tetradecapeptide from the amino end of the heavy chain; this reaction, which occurs at the surface of endothelial cells, is strongly promoted by thrombomodulin. Post-translationally, the vitamin K-dependent, enzymatic carboxylation of some Glu residues allows the modified protein to bind calcium. The iron and 2-oxoglutarate dependent 3-hydroxylation of aspartate and asparagine is (R) stereospecific within EGF domains. In terms of tissue distribution, plasma; synthesized in the liver.

The protein resides in the secreted. Its subcellular location is the golgi apparatus. It localises to the endoplasmic reticulum. It catalyses the reaction Degradation of blood coagulation factors Va and VIIIa.. Protein C is a vitamin K-dependent serine protease that regulates blood coagulation by inactivating factors Va and VIIIa in the presence of calcium ions and phospholipids. Exerts a protective effect on the endothelial cell barrier function. The sequence is that of Vitamin K-dependent protein C (Proc) from Rattus norvegicus (Rat).